We begin with the raw amino-acid sequence, 890 residues long: MSRSATLLLCLLGCHVWKAVTKTLREPGAGAQEVTLKVHISDASTHQPVADALIEIFTNQASIASGTSGTDGVAFIKFQYKLGSQLIVTASKHAYVPNSAPWKPIRLPVFSSLSLGLLPERSATLMVYEDVVQIVSGFQGARPQPRVHFQRRALRLPENTSYSDLTAFLTAASSPSEVDSFPYLRGLDGNGTGNSTRHDLTPVTAVSVHLLSSNGTPVLVDGPIYVTVPLATQSSLRHNAYVAAWRFDQKLGTWLKSGLGLVHQEGSQLTWTYIAPQLGYWVAAMSPPIPGPVVTQDITTYHTVFLLAILGGMAFILLVLLCLLLYYCRRKCLKPRQHHRKLQLPAGLESSKRDQSTSMSHINLLFSRRASEFPGPLSVTSHGRPEAPGTKELMSGVHLEMMSPGGEGDLHTPMLKLSYSTSQEFSSREELLSCKEEDKSQISFDNLTPSGTLGKDYHKSVEVFPLKARKSMEREGYESSGNDDYRGSYNTVLSQPLFEKQDREGPASTGSKLTIQEHLYPAPSSPEKEQLLDRRPTECMMSRSVDHLERPTSFPRPGQLICCSSVDQVNDSVYRKVLPALVIPAHYMKLPGDHSYVSQPLVVPADQQLEIERLQAELSNPHAGIFPHPSSQIQPQPLSSQAISQQHLQDAGTREWSPQNASMSESLSIPASLNDAALAQMNSEVQLLTEKALMELGGGKPLPHPRAWFVSLDGRSNAHVRHSYIDLQRAGRNGSNDASLDSGVDMNEPKSARKGRGDALSLQQNYPPVQEHQQKEPRAPDSTAYTQLVYLDDVEQSGSECGTTVCTPEDSALRCLLEGSSRRSGGQLPSLQEETTRRTADAPSEPAASPHQRRSAHEEEEDDDDDDQGEDKKSPWQKREERPLMAFNIK.

A signal peptide spans 1–21 (MSRSATLLLCLLGCHVWKAVT). Residues 22-303 (KTLREPGAGA…VTQDITTYHT (282 aa)) lie on the Extracellular side of the membrane. 3 N-linked (GlcNAc...) asparagine glycosylation sites follow: N159, N190, and N194. Residues 304–324 (VFLLAILGGMAFILLVLLCLL) form a helical membrane-spanning segment. The Cytoplasmic portion of the chain corresponds to 325–890 (LYYCRRKCLK…ERPLMAFNIK (566 aa)). A phosphoserine mark is found at S358, S360, S371, S422, S443, and S525. Disordered regions lie at residues 730-759 (AGRN…RGDA) and 818-890 (EGSS…FNIK). Positions 747–757 (NEPKSARKGRG) are enriched in basic and acidic residues. Polar residues predominate over residues 822–833 (RRSGGQLPSLQE). Residues S849 and S855 each carry the phosphoserine modification. The span at 858–869 (EEEEDDDDDDQG) shows a compositional bias: acidic residues. Basic and acidic residues predominate over residues 870-883 (EDKKSPWQKREERP).

The protein belongs to the FAM171 family. Interacts with ADAM10, NSG1 and OAZ1. In terms of tissue distribution, expressed in heart, brain, liver, skeletal muscle, kidney and pancreas. In brain, expressed by glia, pyramidal neurons and astrocytes (at protein level). Highly expressed in placental trophoblasts.

It is found in the cell membrane. Functionally, involved in the regulation of the cytoskeletal dynamics, plays a role in actin stress fiber formation. The polypeptide is Protein FAM171A1 (Homo sapiens (Human)).